A 701-amino-acid chain; its full sequence is MHATNWFDDWNPEALYRDDVTGCDDCSETSPIPKSGIICGPILRLINMDFKEKTYEGSIMVVVRGEENFPKITYQLGPSLPSEDEDIEVNEAFFEGKLFHKDILKDDNIWFYRYEIKLPMSNYEQMVKYAVDGTMEPHYRFFVPSFTQNSNVISYSCNGFSLSVDTSKFKGSLWYDVLKKHRYVHYHAILGGGDQIYSDNIKLHAPNLKAWLETKDPIKKYNTQTTEETKEQIRQFYLEHYLNWYGYGHWYGSTPKSKTTQKCFVKSLACIPAINVWDDHDIIDGYGSYNDSFMKTENFLTVGRMAYRYYMLFQQHVSASKQDGDEYAYLKSKQWILGNEKGSSYIGERSHSIFSWLGPKMAMLGLDCRTERKLHEIFSERSYSLIWERVEREIKNLKGGHLLLMLGIPIAYPRLVWLEWLFTSKLLAPIKYLSKKGIFASGFVNEFNGDVELLDDLNDHWCARHHKKERNYLIMKLQDIGAKYGVRITILSGDVHLASVGRFRAKIHRHHLIMSEEKEKENTRIIEEPTKDVRLIFNIIASAIVNTPPPDAMATLLQKRCRLHHFDLETDEDAVPIFAKEVDGVHKRKESCFMNKRNWSDIIPIENLLNNPQLSKELGVKVGDIVIPGIITEQQKLQKLENDDQINSYPVTSGGLFTTIHVERDANQTNSQTVSYCLPIPELTVTCERLSHKGIKHLNIT.

This is an uncharacterized protein from Saccharomyces cerevisiae (strain ATCC 204508 / S288c) (Baker's yeast).